Here is a 514-residue protein sequence, read N- to C-terminus: Na(+)/H(+) antiporter NhaB (514 aa).

12 helical membrane-spanning segments follow: residues 23–43, 52–72, 97–117, 120–140, 144–164, 202–222, 238–258, 303–323, 353–373, 391–411, 447–467, and 475–495; these read LALL…PFIA, IFTL…LLAI, LLLM…LFIF, LLLS…AAAF, FLDA…FYGI, LMMH…VGEP, FFLR…LTCL, ALIG…VGLI, FTAL…QSLF, LFYL…VGTI, ATPN…APLI, and VWMA…CVEF.

This sequence belongs to the NhaB Na(+)/H(+) (TC 2.A.34) antiporter family.

The protein localises to the cell inner membrane. It catalyses the reaction 2 Na(+)(in) + 3 H(+)(out) = 2 Na(+)(out) + 3 H(+)(in). Na(+)/H(+) antiporter that extrudes sodium in exchange for external protons. This is Na(+)/H(+) antiporter NhaB from Escherichia fergusonii (strain ATCC 35469 / DSM 13698 / CCUG 18766 / IAM 14443 / JCM 21226 / LMG 7866 / NBRC 102419 / NCTC 12128 / CDC 0568-73).